The chain runs to 313 residues: Calcium homeostasis modulator protein 6 (313 aa).

Over 1–21 (MEKFKAVLDLQRKHRNALGYS) the chain is Cytoplasmic. A helical membrane pass occupies residues 22–37 (LVTLLTAGGEKIFSSV). The Extracellular portion of the chain corresponds to 38–46 (VFQCPCTAT). Cystine bridges form between C41/C125, C43/C154, and C138/C145. Residues 47–68 (WNLPYGLVFLLVPALALFLLGY) traverse the membrane as a helical segment. Over 69–101 (ALSARTWRLLTGCCSRSARFSSGLRSAFVCAQL) the chain is Cytoplasmic. A helical membrane pass occupies residues 102–126 (SMTAAFAPLTWVAVALLEGSFYQCA). Residues 127-167 (VSGSARLAPYLCKGRDPNCNATLPQAPCNKQKVEMQEILSQ) lie on the Extracellular side of the membrane. The chain crosses the membrane as a helical span at residues 168–190 (LKAQSQVFGWILIAAVIILLLLV). At 191–313 (KSVTRCFSPV…DMSMTNTHEL (123 aa)) the chain is on the cytoplasmic side.

It belongs to the CALHM family. In terms of assembly, oligomerizes to form decameric and undecameric channels. In terms of processing, N-glycosylated. In terms of tissue distribution, immune cells in primary and secondary lymphoid organs.

It is found in the cell membrane. The enzyme catalyses ATP(in) = ATP(out). Inhibited by Gd(3+). Partially inhibited by divalent ions Ca(2+) and Ba(2+). In terms of biological role, pore-forming subunit of an ATP-permeable channel. In response to pathogen-derived and proinflammatory stimuli, relocates from intracellular compartments to NK-dendritic cell and NK-macrophage immune synapses where it mediates ATP efflux and NK cell activation involved in antimicrobial and antitumor responses. May assemble to form gap junction channel-like structures with gating and ion conductance likely regulated by membrane lipids and voltage rather than by extracellular calcium levels. The polypeptide is Calcium homeostasis modulator protein 6 (Mus musculus (Mouse)).